The primary structure comprises 429 residues: 4-hydroxy-3-methylbut-2-en-1-yl diphosphate synthase (flavodoxin) (429 aa).

The [4Fe-4S] cluster site is built by Cys317, Cys320, Cys363, and Glu370.

Belongs to the IspG family. Requires [4Fe-4S] cluster as cofactor.

It carries out the reaction (2E)-4-hydroxy-3-methylbut-2-enyl diphosphate + oxidized [flavodoxin] + H2O + 2 H(+) = 2-C-methyl-D-erythritol 2,4-cyclic diphosphate + reduced [flavodoxin]. Its pathway is isoprenoid biosynthesis; isopentenyl diphosphate biosynthesis via DXP pathway; isopentenyl diphosphate from 1-deoxy-D-xylulose 5-phosphate: step 5/6. Converts 2C-methyl-D-erythritol 2,4-cyclodiphosphate (ME-2,4cPP) into 1-hydroxy-2-methyl-2-(E)-butenyl 4-diphosphate. In Deinococcus radiodurans (strain ATCC 13939 / DSM 20539 / JCM 16871 / CCUG 27074 / LMG 4051 / NBRC 15346 / NCIMB 9279 / VKM B-1422 / R1), this protein is 4-hydroxy-3-methylbut-2-en-1-yl diphosphate synthase (flavodoxin).